The sequence spans 210 residues: Probable GTP-binding protein EngB (210 aa).

The EngB-type G domain occupies 25–199 (TGIEVAFAGR…RQKLDSWFNE (175 aa)). GTP-binding positions include 33 to 40 (GRSNAGKS), 60 to 64 (GRTQL), 78 to 81 (DLPG), 145 to 148 (TKAD), and 178 to 180 (FSS). Positions 40 and 62 each coordinate Mg(2+).

This sequence belongs to the TRAFAC class TrmE-Era-EngA-EngB-Septin-like GTPase superfamily. EngB GTPase family. Requires Mg(2+) as cofactor.

Its function is as follows. Necessary for normal cell division and for the maintenance of normal septation. This chain is Probable GTP-binding protein EngB, found in Klebsiella pneumoniae (strain 342).